The following is an 868-amino-acid chain: Leucine--tRNA ligase (868 aa).

Residues 42–52 (PYPSGKLHMGH) carry the 'HIGH' region motif. The 'KMSKS' region signature appears at 627 to 631 (KMSKS). Lys-630 is a binding site for ATP.

This sequence belongs to the class-I aminoacyl-tRNA synthetase family.

Its subcellular location is the cytoplasm. It carries out the reaction tRNA(Leu) + L-leucine + ATP = L-leucyl-tRNA(Leu) + AMP + diphosphate. The sequence is that of Leucine--tRNA ligase from Pseudomonas putida (strain GB-1).